A 320-amino-acid chain; its full sequence is L-lactate dehydrogenase 2 (320 aa).

NAD(+)-binding positions include 18–19, Asp40, and Arg45; that span reads AV. Residues Gln88, Arg94, and 126–129 each bind substrate; that span reads NPVD. NAD(+) contacts are provided by residues 124–126 and Ser149; that span reads ITN. 154–157 provides a ligand contact to substrate; that stretch reads DSAR. Residues Arg159 and 171-176 each bind beta-D-fructose 1,6-bisphosphate; that span reads KNVHAY. His181 acts as the Proton acceptor in catalysis. Tyr228 carries the phosphotyrosine modification. Residue Thr237 coordinates substrate.

This sequence belongs to the LDH/MDH superfamily. LDH family. Homotetramer.

It localises to the cytoplasm. The catalysed reaction is (S)-lactate + NAD(+) = pyruvate + NADH + H(+). The protein operates within fermentation; pyruvate fermentation to lactate; (S)-lactate from pyruvate: step 1/1. Allosterically activated by fructose 1,6-bisphosphate (FBP). Its function is as follows. Catalyzes the conversion of lactate to pyruvate. The polypeptide is L-lactate dehydrogenase 2 (Bifidobacterium longum subsp. longum (strain ATCC 15707 / DSM 20219 / JCM 1217 / NCTC 11818 / E194b)).